The following is a 240-amino-acid chain: uncharacterized protein (240 aa).

Residues 1-27 (MKDLQKKSSVRRQITNEDDERYGEDSI) are disordered. Phosphoserine is present on residues Ser-59 and Ser-95. Positions 189–227 (RTPSPTGKSVGDEATSNNMHSSSAIRNPNGPTVDPEEGK) are disordered. Residues 202–218 (ATSNNMHSSSAIRNPNG) are compositionally biased toward polar residues.

This is an uncharacterized protein from Saccharomyces cerevisiae (strain ATCC 204508 / S288c) (Baker's yeast).